Consider the following 438-residue polypeptide: Ribosomal protein uS12 methylthiotransferase RimO (438 aa).

Residues 6 to 118 enclose the MTTase N-terminal domain; the sequence is KQLCLISLGC…IDILIAKKQN (113 aa). 6 residues coordinate [4Fe-4S] cluster: C15, C49, C81, C150, C154, and C157. The 229-residue stretch at 136-364 folds into the Radical SAM core domain; the sequence is TGSSVHAYVK…NKIALKHQHN (229 aa).

This sequence belongs to the methylthiotransferase family. RimO subfamily. Requires [4Fe-4S] cluster as cofactor.

The protein localises to the cytoplasm. The enzyme catalyses L-aspartate(89)-[ribosomal protein uS12]-hydrogen + (sulfur carrier)-SH + AH2 + 2 S-adenosyl-L-methionine = 3-methylsulfanyl-L-aspartate(89)-[ribosomal protein uS12]-hydrogen + (sulfur carrier)-H + 5'-deoxyadenosine + L-methionine + A + S-adenosyl-L-homocysteine + 2 H(+). In terms of biological role, catalyzes the methylthiolation of an aspartic acid residue of ribosomal protein uS12. This Helicobacter acinonychis (strain Sheeba) protein is Ribosomal protein uS12 methylthiotransferase RimO.